The following is a 37-amino-acid chain: Large ribosomal subunit protein bL36B (37 aa).

Belongs to the bacterial ribosomal protein bL36 family.

This is Large ribosomal subunit protein bL36B from Aeromonas salmonicida (strain A449).